Consider the following 502-residue polypeptide: Glycerol kinase (502 aa).

Threonine 14 serves as a coordination point for ADP. ATP contacts are provided by threonine 14, threonine 15, and serine 16. Threonine 14 contributes to the sn-glycerol 3-phosphate binding site. An ADP-binding site is contributed by arginine 18. Sn-glycerol 3-phosphate is bound by residues arginine 84, glutamate 85, and tyrosine 136. 3 residues coordinate glycerol: arginine 84, glutamate 85, and tyrosine 136. Phosphohistidine; by HPr is present on histidine 232. Sn-glycerol 3-phosphate is bound at residue aspartate 246. 2 residues coordinate glycerol: aspartate 246 and glutamine 247. Positions 268 and 311 each coordinate ADP. ATP-binding residues include threonine 268, glycine 311, glutamine 315, and glycine 412. Positions 412 and 416 each coordinate ADP.

The protein belongs to the FGGY kinase family. In terms of assembly, homotetramer and homodimer (in equilibrium). Post-translationally, the phosphoenolpyruvate-dependent sugar phosphotransferase system (PTS), including enzyme I, and histidine-containing protein (HPr) are required for the phosphorylation, which leads to the activation of the enzyme.

The enzyme catalyses glycerol + ATP = sn-glycerol 3-phosphate + ADP + H(+). It participates in polyol metabolism; glycerol degradation via glycerol kinase pathway; sn-glycerol 3-phosphate from glycerol: step 1/1. Activated by phosphorylation and inhibited by fructose 1,6-bisphosphate (FBP). Functionally, key enzyme in the regulation of glycerol uptake and metabolism. Catalyzes the phosphorylation of glycerol to yield sn-glycerol 3-phosphate. The sequence is that of Glycerol kinase from Streptococcus pneumoniae (strain 70585).